Here is a 420-residue protein sequence, read N- to C-terminus: MASNTTVPVITPLAHPEGSKLDFGATVSGVDIENLTDRDFAILRTALFTHQVLVIKSQSHVSPRAQYELTQRFDPLAAPLYGHGNTDSGSVGSKSILHPDLKTIPHQPQVQVIGNGFVPTYEGLSNIQLRHPHHRTFHSTSIPASHDLTHTRFYRWHIDAALYGGVARAPPVVTTLLAVKVPQGRRQTCVYDDGTGDELDVPLGTTAFVSGYKMYDILSETQKAFARSTRVEYAPHPYVWMSSAKSRSTGLGLVSEGKEMPMEELPEIEEDRIQILPMCWRNPVTGKLALQVHPSAVRRLHLEDGTVVEDLKEVREIVYGLQRPGIAPGLVYAHDWEEGDLVIFHNRGTLHSVVGAFAESEVRLFRQCNIAGSEFPMGPEEEEKEEELVHAEQEEGVVEVTKQESLPELRMGAVEVGVAA.

Fe cation is bound by residues H157 and D159. 2-oxoglutarate-binding residues include T206 and W336. H351 is a binding site for Fe cation. Position 366 (R366) interacts with 2-oxoglutarate. R366 serves as a coordination point for substrate.

The protein belongs to the TfdA dioxygenase family. Requires Fe(2+) as cofactor.

The protein localises to the cytoplasm. The protein resides in the cytosol. The enzyme catalyses xanthine + 2-oxoglutarate + O2 = urate + succinate + CO2. Its function is as follows. Alpha-ketoglutarate-dependent xanthine dioxygenase is a non-heme mononuclear Fe(2+) enzyme that decarboxylates alpha-ketoglutarate to succinate and CO(2) while hydroxylating xanthine to generate uric acid. Allows xanthine utilization as a nitrogen source. This Neurospora crassa (strain ATCC 24698 / 74-OR23-1A / CBS 708.71 / DSM 1257 / FGSC 987) protein is Alpha-ketoglutarate-dependent xanthine dioxygenase xan-1.